Reading from the N-terminus, the 454-residue chain is tRNA modification GTPase MnmE (454 aa).

Residues Arg23, Glu80, and Lys120 each contribute to the (6S)-5-formyl-5,6,7,8-tetrahydrofolate site. Residues 216–377 form the TrmE-type G domain; that stretch reads GMKVVIAGRP…LRNHLKQSMG (162 aa). Asn226 contributes to the K(+) binding site. GTP is bound by residues 226–231, 245–251, 270–273, 335–338, and 358–360; these read NAGKSS, TDIAGTT, DTAG, NKAD, and SAR. Ser230 is a Mg(2+) binding site. Thr245, Ile247, and Thr250 together coordinate K(+). Mg(2+) is bound at residue Thr251. Lys454 serves as a coordination point for (6S)-5-formyl-5,6,7,8-tetrahydrofolate.

Belongs to the TRAFAC class TrmE-Era-EngA-EngB-Septin-like GTPase superfamily. TrmE GTPase family. In terms of assembly, homodimer. Heterotetramer of two MnmE and two MnmG subunits. It depends on K(+) as a cofactor.

The protein localises to the cytoplasm. Functionally, exhibits a very high intrinsic GTPase hydrolysis rate. Involved in the addition of a carboxymethylaminomethyl (cmnm) group at the wobble position (U34) of certain tRNAs, forming tRNA-cmnm(5)s(2)U34. The polypeptide is tRNA modification GTPase MnmE (Escherichia coli O127:H6 (strain E2348/69 / EPEC)).